A 64-amino-acid chain; its full sequence is Beta-defensin 1 (64 aa).

An N-terminal signal peptide occupies residues 1–22 (MRLHHLLLVLFFVVLSAGSGFT). Intrachain disulfides connect Cys-31-Cys-60, Cys-38-Cys-53, and Cys-43-Cys-61.

The protein belongs to the beta-defensin family. As to quaternary structure, monomer. Homodimer.

It localises to the secreted. Its subcellular location is the membrane. Functionally, has bactericidal activity. May act as a ligand for C-C chemokine receptor CCR6. Positively regulates the sperm motility and bactericidal activity in a CCR6-dependent manner. Binds to CCR6 and triggers Ca2+ mobilization in the sperm which is important for its motility. In Ovis aries (Sheep), this protein is Beta-defensin 1 (DEFB1).